We begin with the raw amino-acid sequence, 163 residues long: NADH-quinone oxidoreductase subunit I (163 aa).

2 consecutive 4Fe-4S ferredoxin-type domains span residues 53–83 (LRRY…IEAG) and 94–123 (VRYD…EGPN). C63, C66, C69, C73, C103, C106, C109, and C113 together coordinate [4Fe-4S] cluster.

It belongs to the complex I 23 kDa subunit family. In terms of assembly, NDH-1 is composed of 14 different subunits. Subunits NuoA, H, J, K, L, M, N constitute the membrane sector of the complex. [4Fe-4S] cluster serves as cofactor.

Its subcellular location is the cell inner membrane. The enzyme catalyses a quinone + NADH + 5 H(+)(in) = a quinol + NAD(+) + 4 H(+)(out). Functionally, NDH-1 shuttles electrons from NADH, via FMN and iron-sulfur (Fe-S) centers, to quinones in the respiratory chain. The immediate electron acceptor for the enzyme in this species is believed to be ubiquinone. Couples the redox reaction to proton translocation (for every two electrons transferred, four hydrogen ions are translocated across the cytoplasmic membrane), and thus conserves the redox energy in a proton gradient. In Allorhizobium ampelinum (strain ATCC BAA-846 / DSM 112012 / S4) (Agrobacterium vitis (strain S4)), this protein is NADH-quinone oxidoreductase subunit I.